We begin with the raw amino-acid sequence, 295 residues long: Small ribosomal subunit protein bS1 (295 aa).

S1 motif domains follow at residues glycine 28–arginine 97, glycine 115–arginine 179, and glycine 193–lysine 261.

It belongs to the bacterial ribosomal protein bS1 family.

Its function is as follows. Binds mRNA. This chain is Small ribosomal subunit protein bS1 (rpsA), found in Synechococcus elongatus (strain ATCC 33912 / PCC 7942 / FACHB-805) (Anacystis nidulans R2).